A 1234-amino-acid polypeptide reads, in one-letter code: PAN2-PAN3 deadenylation complex catalytic subunit PAN2 (1234 aa).

Positions 12–32 (LKNSNNNSNSNSSSNNSSNGV) are disordered. The span at 14–30 (NSNNNSNSNSSSNNSSN) shows a compositional bias: low complexity. 3 WD repeats span residues 176–213 (NHTG…SIKT), 272–315 (AFPA…VYHA), and 342–381 (QQQP…TLSK). The disordered stretch occupies residues 323-346 (PLPPAGSSAAQQQKQQQQQQQQPH). The segment covering 333–344 (QQQKQQQQQQQQ) has biased composition (low complexity). Positions 383-537 (FVNFPQEIER…DSIFQCQNDE (155 aa)) are linker. The USP domain occupies 538–946 (KIPNCYSRLQ…KPVIVIYQEV (409 aa)). The tract at residues 751-775 (PNTQQDQQQQQQQQQQQQQQQQPTN) is disordered. Positions 754–772 (QQDQQQQQQQQQQQQQQQQ) are enriched in low complexity. Residues Asp-1004, Glu-1006, Asp-1138, and Asp-1191 each contribute to the a divalent metal cation site. An Exonuclease domain is found at 1072 to 1199 (GEAFIDDYIV…EDARTALLLY (128 aa)).

This sequence belongs to the peptidase C19 family. PAN2 subfamily. As to quaternary structure, forms a heterotrimer with an asymmetric homodimer of the regulatory subunit PAN3 to form the poly(A)-nuclease (PAN) deadenylation complex. Requires a divalent metal cation as cofactor.

It localises to the cytoplasm. The enzyme catalyses Exonucleolytic cleavage of poly(A) to 5'-AMP.. Its activity is regulated as follows. Positively regulated by the regulatory subunit PAN3. Its function is as follows. Catalytic subunit of the poly(A)-nuclease (PAN) deadenylation complex, one of two cytoplasmic mRNA deadenylases involved in mRNA turnover. PAN specifically shortens poly(A) tails of RNA and the activity is stimulated by poly(A)-binding protein PAB1. PAN deadenylation is followed by rapid degradation of the shortened mRNA tails by the CCR4-NOT complex. Deadenylated mRNAs are then degraded by two alternative mechanisms, namely exosome-mediated 3'-5' exonucleolytic degradation, or deadenylation-dependent mRNA decaping and subsequent 5'-3' exonucleolytic degradation by XRN1. May also be involved in post-transcriptional maturation of mRNA poly(A) tails. This chain is PAN2-PAN3 deadenylation complex catalytic subunit PAN2, found in Lodderomyces elongisporus (strain ATCC 11503 / CBS 2605 / JCM 1781 / NBRC 1676 / NRRL YB-4239) (Yeast).